Here is a 264-residue protein sequence, read N- to C-terminus: Purine nucleoside phosphorylase slr1573 (264 aa).

Zn(2+)-binding residues include His61, Cys104, and His121.

Belongs to the purine nucleoside phosphorylase YfiH/LACC1 family. In terms of assembly, homodimer. Cu(2+) is required as a cofactor. The cofactor is Zn(2+).

The catalysed reaction is adenosine + phosphate = alpha-D-ribose 1-phosphate + adenine. The enzyme catalyses S-methyl-5'-thioadenosine + phosphate = 5-(methylsulfanyl)-alpha-D-ribose 1-phosphate + adenine. It catalyses the reaction inosine + phosphate = alpha-D-ribose 1-phosphate + hypoxanthine. It carries out the reaction adenosine + H2O + H(+) = inosine + NH4(+). Functionally, purine nucleoside enzyme that catalyzes the phosphorolysis of adenosine and inosine nucleosides, yielding D-ribose 1-phosphate and the respective free bases, adenine and hypoxanthine. Also catalyzes the phosphorolysis of S-methyl-5'-thioadenosine into adenine and S-methyl-5-thio-alpha-D-ribose 1-phosphate. Also has adenosine deaminase activity. The polypeptide is Purine nucleoside phosphorylase slr1573 (Synechocystis sp. (strain ATCC 27184 / PCC 6803 / Kazusa)).